We begin with the raw amino-acid sequence, 427 residues long: Peptidase B (427 aa).

Mn(2+) contacts are provided by Lys195 and Asp200. The active site involves Lys207. The Mn(2+) site is built by Asp218, Asp277, and Glu279. Arg281 is a catalytic residue.

It belongs to the peptidase M17 family. Homohexamer. Requires Mn(2+) as cofactor.

The protein resides in the cytoplasm. It catalyses the reaction Release of an N-terminal amino acid, Xaa, from a peptide or arylamide. Xaa is preferably Glu or Asp but may be other amino acids, including Leu, Met, His, Cys and Gln.. Its function is as follows. Probably plays an important role in intracellular peptide degradation. In Salmonella typhi, this protein is Peptidase B.